We begin with the raw amino-acid sequence, 305 residues long: Orotidine 5'-phosphate decarboxylase (305 aa).

Catalysis depends on K108, which acts as the Proton donor.

Belongs to the OMP decarboxylase family. Type 2 subfamily.

The catalysed reaction is orotidine 5'-phosphate + H(+) = UMP + CO2. It participates in pyrimidine metabolism; UMP biosynthesis via de novo pathway; UMP from orotate: step 2/2. The sequence is that of Orotidine 5'-phosphate decarboxylase from Caldicellulosiruptor bescii (strain ATCC BAA-1888 / DSM 6725 / KCTC 15123 / Z-1320) (Anaerocellum thermophilum).